The chain runs to 512 residues: tRNA-2-methylthio-N(6)-dimethylallyladenosine synthase (512 aa).

The tract at residues 1-22 (MVAHDAAAGVTGEGAGPPVRRA) is disordered. Positions 25-141 (RTYQVRTYGC…LPTLLERARH (117 aa)) constitute an MTTase N-terminal domain. [4Fe-4S] cluster-binding residues include C34, C70, C104, C178, C182, and C185. The Radical SAM core domain occupies 164–400 (RESAYAAWVS…IALQEQISLE (237 aa)). Positions 403-471 (RALVGQAVEV…PHHLIADAGV (69 aa)) constitute a TRAM domain.

It belongs to the methylthiotransferase family. MiaB subfamily. In terms of assembly, monomer. [4Fe-4S] cluster serves as cofactor.

It is found in the cytoplasm. The enzyme catalyses N(6)-dimethylallyladenosine(37) in tRNA + (sulfur carrier)-SH + AH2 + 2 S-adenosyl-L-methionine = 2-methylsulfanyl-N(6)-dimethylallyladenosine(37) in tRNA + (sulfur carrier)-H + 5'-deoxyadenosine + L-methionine + A + S-adenosyl-L-homocysteine + 2 H(+). In terms of biological role, catalyzes the methylthiolation of N6-(dimethylallyl)adenosine (i(6)A), leading to the formation of 2-methylthio-N6-(dimethylallyl)adenosine (ms(2)i(6)A) at position 37 in tRNAs that read codons beginning with uridine. This is tRNA-2-methylthio-N(6)-dimethylallyladenosine synthase from Mycobacterium bovis (strain ATCC BAA-935 / AF2122/97).